Reading from the N-terminus, the 178-residue chain is Protein GrpE (178 aa).

Positions 1-11 (MADELSEKSVE) are enriched in basic and acidic residues. The tract at residues 1-32 (MADELSEKSVEGTEEDGESAPAEGTTEGVPVD) is disordered.

It belongs to the GrpE family. In terms of assembly, homodimer.

It localises to the cytoplasm. Its function is as follows. Participates actively in the response to hyperosmotic and heat shock by preventing the aggregation of stress-denatured proteins, in association with DnaK and GrpE. It is the nucleotide exchange factor for DnaK and may function as a thermosensor. Unfolded proteins bind initially to DnaJ; upon interaction with the DnaJ-bound protein, DnaK hydrolyzes its bound ATP, resulting in the formation of a stable complex. GrpE releases ADP from DnaK; ATP binding to DnaK triggers the release of the substrate protein, thus completing the reaction cycle. Several rounds of ATP-dependent interactions between DnaJ, DnaK and GrpE are required for fully efficient folding. The polypeptide is Protein GrpE (Methanothrix thermoacetophila (strain DSM 6194 / JCM 14653 / NBRC 101360 / PT) (Methanosaeta thermophila)).